A 1161-amino-acid polypeptide reads, in one-letter code: Integrin alpha-D (1161 aa).

An N-terminal signal peptide occupies residues 1–17 (MTFGTVLLLSVLASYHG). Topologically, residues 18–1099 (FNLDVEEPTI…MVLEEDEVYN (1082 aa)) are extracellular. FG-GAP repeat units follow at residues 19 to 76 (NLDV…MCQP) and 77 to 136 (IPLH…IIQT). Asparagine 59 is a glycosylation site (N-linked (GlcNAc...) asparagine). Cysteine 67 and cysteine 74 are disulfide-bonded. N-linked (GlcNAc...) asparagine glycosylation is found at asparagine 87 and asparagine 99. A disulfide bridge connects residues cysteine 106 and cysteine 124. The 183-residue stretch at 150–332 (DIVFLIDGSG…SIQKQLQEKI (183 aa)) folds into the VWFA domain. 5 FG-GAP repeats span residues 339–390 (QSRA…PTFI), 391–442 (NMSQ…SRQW), 443–503 (RKKA…RVQW), 506–564 (DAVL…SGIS), and 569–629 (QRIA…FSPV). N-linked (GlcNAc...) asparagine glycosylation occurs at asparagine 391. Positions 465, 467, 469, 473, 529, 531, 533, 537, 592, 596, and 600 each coordinate Ca(2+). Residues cysteine 654 and cysteine 709 are joined by a disulfide bond. N-linked (GlcNAc...) asparagine glycosylation is found at asparagine 690 and asparagine 732. 2 cysteine pairs are disulfide-bonded: cysteine 768–cysteine 774 and cysteine 845–cysteine 860. N-linked (GlcNAc...) asparagine glycosylation is found at asparagine 872 and asparagine 956. 2 cysteine pairs are disulfide-bonded: cysteine 993-cysteine 1017 and cysteine 1022-cysteine 1027. A glycan (N-linked (GlcNAc...) asparagine) is linked at asparagine 1045. The chain crosses the membrane as a helical span at residues 1100-1120 (AIPIIMGSSVGALLLLALITA). The Cytoplasmic segment spans residues 1121-1161 (TLYKLGFFKRHYKEMLEDKPEDTATFSGDDFSCVAPNVPLS). The GFFKR motif signature appears at 1126 to 1130 (GFFKR).

This sequence belongs to the integrin alpha chain family. As to quaternary structure, heterodimer of an alpha and a beta subunit. Alpha-D associates with beta-2. Expressed moderately on myelomonocytic cell lines and subsets of peripheral blood leukocytes and strongly on tissue-specialized cells, including macrophages foam cells within atherosclerotic plaques, and on splenic red pulp macrophages.

Its subcellular location is the membrane. In terms of biological role, integrin alpha-D/beta-2 is a receptor for ICAM3 and VCAM1. May play a role in the atherosclerotic process such as clearing lipoproteins from plaques and in phagocytosis of blood-borne pathogens, particulate matter, and senescent erythrocytes from the blood. The sequence is that of Integrin alpha-D (ITGAD) from Homo sapiens (Human).